The chain runs to 963 residues: Probable sucrose-phosphate synthase 2 (963 aa).

Residues 111-150 (KLRTDTNADMSEDLFEGEKGEDAGDPSVAYGDSTTGSSPK) form a disordered region.

It belongs to the glycosyltransferase 1 family. In terms of assembly, homodimer or homotetramer. As to expression, expressed in germinating seeds.

The enzyme catalyses beta-D-fructose 6-phosphate + UDP-alpha-D-glucose = sucrose 6(F)-phosphate + UDP + H(+). It participates in glycan biosynthesis; sucrose biosynthesis; sucrose from D-fructose 6-phosphate and UDP-alpha-D-glucose: step 1/2. Its activity is regulated as follows. Activity is regulated by phosphorylation and moderated by concentration of metabolites and light. Plays a role in photosynthetic sucrose synthesis by catalyzing the rate-limiting step of sucrose biosynthesis from UDP-glucose and fructose- 6-phosphate. Involved in the regulation of carbon partitioning in the leaves of plants. May regulate the synthesis of sucrose and therefore play a major role as a limiting factor in the export of photoassimilates out of the leaf. Plays a role for sucrose availability that is essential for plant growth and fiber elongation. This is Probable sucrose-phosphate synthase 2 (SPS2) from Oryza sativa subsp. japonica (Rice).